The primary structure comprises 164 residues: Protein phosphatase 1 regulatory subunit 14C (164 aa).

The segment covering M1–A19 has biased composition (gly residues). A disordered region spans residues M1–K70. Residue S2 is modified to N-acetylserine. S25 carries the post-translational modification Phosphoserine. The residue at position 27 (R27) is an Omega-N-methylarginine. A Phosphoserine modification is found at S33. The span at V50 to Q62 shows a compositional bias: low complexity. T72 is modified (phosphothreonine; by ILK1).

It belongs to the PP1 inhibitor family. Post-translationally, the main inhibitory site appears to be Thr-72. Has over 600-fold higher inhibitory activity when phosphorylated, creating a molecular switch for regulating the phosphorylation status of PPP1CA substrates and smooth muscle contraction. Detected in heart, muscle, spinal cord, hippocampus, hypothalamus, thalamus, midbrain, brain stem, cerebellum, brain cortex and olfactory bulb.

The protein resides in the endomembrane system. Its function is as follows. Inhibitor of the PP1 regulatory subunit PPP1CA. This is Protein phosphatase 1 regulatory subunit 14C (Ppp1r14c) from Mus musculus (Mouse).